A 592-amino-acid polypeptide reads, in one-letter code: Threonine--tRNA ligase (592 aa).

Residues 193–488 (DHRKLGPALG…LIEHYGGAFP (296 aa)) form a catalytic region. Positions 284, 335, and 465 each coordinate Zn(2+).

Belongs to the class-II aminoacyl-tRNA synthetase family. As to quaternary structure, homodimer. Zn(2+) is required as a cofactor.

Its subcellular location is the cytoplasm. It carries out the reaction tRNA(Thr) + L-threonine + ATP = L-threonyl-tRNA(Thr) + AMP + diphosphate + H(+). In terms of biological role, catalyzes the attachment of threonine to tRNA(Thr) in a two-step reaction: L-threonine is first activated by ATP to form Thr-AMP and then transferred to the acceptor end of tRNA(Thr). Also edits incorrectly charged L-seryl-tRNA(Thr). This is Threonine--tRNA ligase from Treponema pallidum (strain Nichols).